A 562-amino-acid polypeptide reads, in one-letter code: Ycf55-like protein (562 aa).

Residues 7 to 125 (TIVIVDEDPV…DLVTGLKQVH (119 aa)) enclose the Response regulatory domain.

It belongs to the ycf55 family.

The sequence is that of Ycf55-like protein from Synechocystis sp. (strain ATCC 27184 / PCC 6803 / Kazusa).